Here is a 142-residue protein sequence, read N- to C-terminus: Hemoglobin subunit alpha (142 aa).

A Globin domain is found at 2-142; sequence VLSAADKGNV…VSTVLTSKYR (141 aa). S4 is modified (phosphoserine). N6-succinyllysine occurs at positions 8 and 12. Position 17 is an N6-acetyllysine; alternate (K17). The residue at position 17 (K17) is an N6-succinyllysine; alternate. Position 25 is a phosphotyrosine (Y25). S36 carries the phosphoserine modification. Residue K41 is modified to N6-succinyllysine. S50 bears the Phosphoserine mark. H59 provides a ligand contact to O2. Heme b is bound at residue H88. S103 bears the Phosphoserine mark. T109 is modified (phosphothreonine). S125 carries the post-translational modification Phosphoserine. Phosphothreonine is present on residues T135 and T138. S139 is modified (phosphoserine).

Belongs to the globin family. In terms of assembly, heterotetramer of two alpha chains and two beta chains. As to expression, red blood cells.

Its function is as follows. Involved in oxygen transport from the lung to the various peripheral tissues. Hemopressin acts as an antagonist peptide of the cannabinoid receptor CNR1. Hemopressin-binding efficiently blocks cannabinoid receptor CNR1 and subsequent signaling. The polypeptide is Hemoglobin subunit alpha (HBA) (Bos gaurus frontalis (Domestic gayal)).